The primary structure comprises 409 residues: Glucose-1-phosphate adenylyltransferase (409 aa).

Residues G168, 183–184 (EK), and S201 contribute to the alpha-D-glucose 1-phosphate site.

It belongs to the bacterial/plant glucose-1-phosphate adenylyltransferase family. Homotetramer.

The enzyme catalyses alpha-D-glucose 1-phosphate + ATP + H(+) = ADP-alpha-D-glucose + diphosphate. Its pathway is glycan biosynthesis; glycogen biosynthesis. In terms of biological role, involved in the biosynthesis of ADP-glucose, a building block required for the elongation reactions to produce glycogen. Catalyzes the reaction between ATP and alpha-D-glucose 1-phosphate (G1P) to produce pyrophosphate and ADP-Glc. The sequence is that of Glucose-1-phosphate adenylyltransferase from Corynebacterium efficiens (strain DSM 44549 / YS-314 / AJ 12310 / JCM 11189 / NBRC 100395).